The primary structure comprises 29 residues: Kappa-theraphotoxin-Ps1a (29 aa).

Intrachain disulfides connect C2–C16, C9–C21, and C15–C25. At I29 the chain carries Isoleucine amide.

This sequence belongs to the neurotoxin 30 (phrixotoxin) family. Expressed by the venom gland.

The protein localises to the secreted. Its function is as follows. Potent and specific blocker of Kv4.2/KCND2 (IC(50)=5 nM) and Kv4.3/KCND3 (IC(50)=28 nM) potassium channels. Acts by altering the gating properties of these channels. Also shows moderate inhibition on human voltage-gated sodium channel Nav1.7/SCN9A activation (IC(50)=423 nM). The sequence is that of Kappa-theraphotoxin-Ps1a from Paraphysa scrofa (Chilean copper tarantula).